The sequence spans 126 residues: Profilin (126 aa).

This sequence belongs to the profilin family. As to quaternary structure, occurs in many kinds of cells as a complex with monomeric actin in a 1:1 ratio.

It localises to the cytoplasm. The protein resides in the cytoskeleton. Binds to actin and affects the structure of the cytoskeleton. At high concentrations, profilin prevents the polymerization of actin, whereas it enhances it at low concentrations. By binding to PIP2, it inhibits the formation of IP3 and DG. This chain is Profilin, found in Bombyx mori (Silk moth).